We begin with the raw amino-acid sequence, 1370 residues long: Zinc finger MYM-type protein 3 (1370 aa).

Low complexity-rich tracts occupy residues Met1 to Pro12 and Pro52 to Asp61. Disordered stretches follow at residues Met1–Val72 and Pro90–Gly301. Basic and acidic residues predominate over residues Ala230 to Val253. Residues Ser263 and Ser267 each carry the phosphoserine modification. A compositionally biased stretch (acidic residues) spans Ser263 to Phe279. Residues Lys308, Lys320, and Lys328 each participate in a glycyl lysine isopeptide (Lys-Gly) (interchain with G-Cter in SUMO2) cross-link. 9 consecutive MYM-type zinc fingers follow at residues Gln332–Ser366, His378–Val422, His429–Ser464, Lys477–Leu511, Ser521–Tyr559, Tyr567–Val604, Phe612–Leu646, Lys653–Glu692, and Trp699–Ile733. Ser464 is modified (phosphoserine). Over residues Asn759 to Arg794 the composition is skewed to polar residues. The segment at Asn759 to Asn830 is disordered. Residues Lys778 and Lys786 each participate in a glycyl lysine isopeptide (Lys-Gly) (interchain with G-Cter in SUMO2) cross-link. A Phosphothreonine modification is found at Thr795. Residue Lys804 forms a Glycyl lysine isopeptide (Lys-Gly) (interchain with G-Cter in SUMO2) linkage. Residues Ala815–Thr826 are compositionally biased toward pro residues. 2 positions are modified to phosphothreonine: Thr817 and Thr826. Residues Lys847, Lys861, Lys920, and Lys1275 each participate in a glycyl lysine isopeptide (Lys-Gly) (interchain with G-Cter in SUMO2) cross-link.

May be a component of a BHC histone deacetylase complex that contains HDAC1, HDAC2, HMG20B/BRAF35, KDM1A, RCOR1/CoREST, PHF21A/BHC80, ZMYM2, ZNF217, ZMYM3, GSE1 and GTF2I. In terms of tissue distribution, most abundant in brain, moderate in muscle and heart, low in other tissues except placenta.

The protein localises to the nucleus. Its function is as follows. Plays a role in the regulation of cell morphology and cytoskeletal organization. In Homo sapiens (Human), this protein is Zinc finger MYM-type protein 3 (ZMYM3).